Here is a 701-residue protein sequence, read N- to C-terminus: Cytosolic endo-beta-N-acetylglucosaminidase 2 (701 aa).

The protein belongs to the glycosyl hydrolase 85 family.

Its subcellular location is the cytoplasm. The protein resides in the cytosol. The catalysed reaction is an N(4)-(oligosaccharide-(1-&gt;3)-[oligosaccharide-(1-&gt;6)]-beta-D-Man-(1-&gt;4)-beta-D-GlcNAc-(1-&gt;4)-alpha-D-GlcNAc)-L-asparaginyl-[protein] + H2O = an oligosaccharide-(1-&gt;3)-[oligosaccharide-(1-&gt;6)]-beta-D-Man-(1-&gt;4)-D-GlcNAc + N(4)-(N-acetyl-beta-D-glucosaminyl)-L-asparaginyl-[protein]. In terms of biological role, endoglycosidase that releases N-glycans from glycoproteins by cleaving the beta-1,4-glycosidic bond in the N,N'-diacetylchitobiose core. Involved in the production of high-mannose type N-glycans during plant development and fruit maturation. This chain is Cytosolic endo-beta-N-acetylglucosaminidase 2, found in Arabidopsis thaliana (Mouse-ear cress).